Here is a 445-residue protein sequence, read N- to C-terminus: 23S rRNA (uracil(1939)-C(5))-methyltransferase RlmD (445 aa).

A TRAM domain is found at 12-70 (SKQLSSKLSLNVTQLDHLGAGIAHHQGKIVFINGALPGETVQVQLTEQKKKFSRAKLLK). 4 residues coordinate [4Fe-4S] cluster: cysteine 83, cysteine 89, cysteine 92, and cysteine 171. Residues glutamine 278, phenylalanine 307, asparagine 312, glutamate 328, aspartate 355, and aspartate 375 each contribute to the S-adenosyl-L-methionine site. Cysteine 401 serves as the catalytic Nucleophile.

The protein belongs to the class I-like SAM-binding methyltransferase superfamily. RNA M5U methyltransferase family. RlmD subfamily.

The catalysed reaction is uridine(1939) in 23S rRNA + S-adenosyl-L-methionine = 5-methyluridine(1939) in 23S rRNA + S-adenosyl-L-homocysteine + H(+). Catalyzes the formation of 5-methyl-uridine at position 1939 (m5U1939) in 23S rRNA. This Shewanella piezotolerans (strain WP3 / JCM 13877) protein is 23S rRNA (uracil(1939)-C(5))-methyltransferase RlmD.